The chain runs to 155 residues: Ribosome maturation factor RimP (155 aa).

It belongs to the RimP family.

Its subcellular location is the cytoplasm. Its function is as follows. Required for maturation of 30S ribosomal subunits. This is Ribosome maturation factor RimP from Synechococcus sp. (strain WH7803).